The primary structure comprises 103 residues: Co-chaperonin GroES (103 aa).

This sequence belongs to the GroES chaperonin family. As to quaternary structure, heptamer of 7 subunits arranged in a ring. Interacts with the chaperonin GroEL.

The protein localises to the cytoplasm. Its function is as follows. Together with the chaperonin GroEL, plays an essential role in assisting protein folding. The GroEL-GroES system forms a nano-cage that allows encapsulation of the non-native substrate proteins and provides a physical environment optimized to promote and accelerate protein folding. GroES binds to the apical surface of the GroEL ring, thereby capping the opening of the GroEL channel. The chain is Co-chaperonin GroES from Nostoc sp. (strain PCC 7120 / SAG 25.82 / UTEX 2576).